The sequence spans 41 residues: Large ribosomal subunit protein bL36 (41 aa).

This sequence belongs to the bacterial ribosomal protein bL36 family.

The chain is Large ribosomal subunit protein bL36 from Orientia tsutsugamushi (strain Boryong) (Rickettsia tsutsugamushi).